Reading from the N-terminus, the 555-residue chain is E3 ubiquitin-protein ligase ARIH1 (555 aa).

Residues 1-47 (MDSDEGYNYEFDEDEECSEEDSGAEEEEDEDDDEPDDDNLDLGEVEL) are compositionally biased toward acidic residues. Residues 1–93 (MDSDEGYNYE…GGGGGPGHEQ (93 aa)) are disordered. Over residues 65–90 (ETGGGGGSALGPGGGGGGGGGGGGPG) the composition is skewed to gly residues. The tract at residues 103 to 151 (TAEQILQHMVECIREVNEVIQNPATITRILLSHFNWDKEKLMERYFDGN) is UBA-like. K140 carries the post-translational modification N6-acetyllysine. The interval 180–391 (QDMPCQICYL…SAWYNCNRYN (212 aa)) is TRIAD supradomain. Zn(2+)-binding residues include C184, C187, C201, H203, C206, C209, C229, C234, C274, C279, C295, C297, C302, C305, H310, C315, C342, and C345. The RING-type 1 zinc finger occupies 184-234 (CQICYLNYPNSYFTGLECGHKFCMQCWSEYLTTKIMEEGMGQTISCPAHGC). The IBR-type zinc-finger motif lies at 254-315 (LKYQHLITNS…GENWHDPVKC (62 aa)). The segment at 342-373 (CPKCHVTIEKDGGCNHMVCRNQNCKAEFCWVC) adopts an RING-type 2; atypical zinc-finger fold. The active site involves C355. 6 residues coordinate Zn(2+): C360, C365, C370, C373, H380, and C387. The interval 406-555 (RAALQRYLFY…EKDLWEYIED (150 aa)) is ariadne domain.

It belongs to the RBR family. Ariadne subfamily. As to quaternary structure, interacts (via the first RING-type zinc finger) with UBE2L3. Associates with cullin-RING ubiquitin ligase (CRL) complexes containing CUL1, CUL2 and CUL3. Interacts with neddylated CUL1. Interacts with neddylated CUL2. Interacts with neddylated CUL3. Interacts with neddylated CUL4A.

It is found in the cytoplasm. Its subcellular location is the nucleus. The protein localises to the cajal body. It catalyses the reaction [E2 ubiquitin-conjugating enzyme]-S-ubiquitinyl-L-cysteine + [acceptor protein]-L-lysine = [E2 ubiquitin-conjugating enzyme]-L-cysteine + [acceptor protein]-N(6)-ubiquitinyl-L-lysine.. It participates in protein modification; protein ubiquitination. Autoinhibited by the ariadne domain, which masks the second RING-type zinc finger that contains the active site and inhibits the E3 activity. Inhibition is relieved upon binding to neddylated cullin-RING ubiquitin ligase complexes, which activate the E3 ligase activity of ARIH1. Its function is as follows. E3 ubiquitin-protein ligase, which catalyzes ubiquitination of target proteins together with ubiquitin-conjugating enzyme E2 UBE2L3. Acts as an atypical E3 ubiquitin-protein ligase by working together with cullin-RING ubiquitin ligase (CRL) complexes and initiating ubiquitination of CRL substrates: associates with CRL complexes and specifically mediates addition of the first ubiquitin on CRLs targets. The initial ubiquitin is then elongated by CDC34/UBE2R1 and UBE2R2. E3 ubiquitin-protein ligase activity is activated upon binding to neddylated cullin-RING ubiquitin ligase complexes. Plays a role in protein translation in response to DNA damage by mediating ubiquitination of EIF4E2, the consequences of EIF4E2 ubiquitination are however unclear. According to a report, EIF4E2 ubiquitination leads to promote EIF4E2 cap-binding and protein translation arrest. According to another report EIF4E2 ubiquitination leads to its subsequent degradation. Acts as the ligase involved in ISGylation of EIF4E2. In vitro, controls the degradation of the LINC (LInker of Nucleoskeleton and Cytoskeleton) complex member SUN2 and may therefore have a role in the formation and localization of the LINC complex, and as a consequence, may act in nuclear subcellular localization and nuclear morphology. This chain is E3 ubiquitin-protein ligase ARIH1 (ARIH1), found in Bos taurus (Bovine).